The primary structure comprises 138 residues: Large ribosomal subunit protein bL17 (138 aa).

Belongs to the bacterial ribosomal protein bL17 family. As to quaternary structure, part of the 50S ribosomal subunit. Contacts protein L32.

The chain is Large ribosomal subunit protein bL17 from Phenylobacterium zucineum (strain HLK1).